The chain runs to 418 residues: Serine hydroxymethyltransferase (418 aa).

Residues Leu118 and 122–124 (GHL) each bind (6S)-5,6,7,8-tetrahydrofolate. An N6-(pyridoxal phosphate)lysine modification is found at Lys227. Residue Glu242 participates in (6S)-5,6,7,8-tetrahydrofolate binding.

The protein belongs to the SHMT family. As to quaternary structure, homodimer. Requires pyridoxal 5'-phosphate as cofactor.

The protein resides in the cytoplasm. The catalysed reaction is (6R)-5,10-methylene-5,6,7,8-tetrahydrofolate + glycine + H2O = (6S)-5,6,7,8-tetrahydrofolate + L-serine. The protein operates within one-carbon metabolism; tetrahydrofolate interconversion. It functions in the pathway amino-acid biosynthesis; glycine biosynthesis; glycine from L-serine: step 1/1. In terms of biological role, catalyzes the reversible interconversion of serine and glycine with tetrahydrofolate (THF) serving as the one-carbon carrier. This reaction serves as the major source of one-carbon groups required for the biosynthesis of purines, thymidylate, methionine, and other important biomolecules. Also exhibits THF-independent aldolase activity toward beta-hydroxyamino acids, producing glycine and aldehydes, via a retro-aldol mechanism. This chain is Serine hydroxymethyltransferase, found in Chloroflexus aggregans (strain MD-66 / DSM 9485).